The following is a 277-amino-acid chain: Alpha-ketoglutarate-dependent dioxygenase tstK (277 aa).

It belongs to the asaB hydroxylase/desaturase family.

The enzyme catalyses 2-[(1R,8S,14R,15R)-11-hydroxy-14,15-bis[(6E)-oct-6-en-1-yl]-3,5,9-trioxo-4,10-dioxatetracyclo[9.4.0.0(2,6).0(8,12)]pentadeca-2(6),12-dien-8-yl]acetate + 3 2-oxoglutarate + 3 O2 = phomoidride A + 3 succinate + 3 CO2 + H2O. Its function is as follows. Alpha-ketoglutarate-dependent dioxygenase; part of the gene cluster that mediates the biosynthesis of the antihypercholesterolemic agents phomoidrides which are dimeric anhydrides. Within the pathway, tstK is responsible for the iterative oxidation necessary to convert prephomoidride to phomoidride A. The pathway begins with the highly reducing polyketide synthase tstiA that catalyzes the formation of a C12-fatty acyl-ACP, starting from one acetate and 5 malonate units. The hydrolase tstM is involved in the release of the C12-fatty acyl chain from phiA. The alkylcitrate synthase (ACS) tstJ and the alkylcitrate dehydratase (ACDH) tstI then give rise to decarboxylated monomeric anhydrides by coupling the C12-fatty acyl chain with oxalacetic acid. The cyclase tstC is responsible for the dimerization of the monomeric anhydrides which leads to the production of prephomoidride that contains the characteristic bicyclo[4.3.1]deca-1,6-diene system of phomoidrides. Iterative oxidation catalyzed by the alpha-ketoglutarate-dependent dioxygenase tstK produced then phomoidride A. Finally, the methyltransferase tstE converts phomoidride A to phomoidride B via an acetalization reaction. The phosphatidylethanolamine-binding protein tstB and tstN are not essential for dimerization and their functions have still to be determined. This is Alpha-ketoglutarate-dependent dioxygenase tstK from Talaromyces stipitatus (strain ATCC 10500 / CBS 375.48 / QM 6759 / NRRL 1006) (Penicillium stipitatum).